A 69-amino-acid chain; its full sequence is Protein translocase subunit SecE (69 aa).

Residues 43–63 (GLGICLLGFVGFVIHVPITYL) form a helical membrane-spanning segment.

This sequence belongs to the SecE/SEC61-gamma family. As to quaternary structure, component of the Sec protein translocase complex. Heterotrimer consisting of SecY (alpha), SecG (beta) and SecE (gamma) subunits. The heterotrimers can form oligomers, although 1 heterotrimer is thought to be able to translocate proteins. Interacts with the ribosome. May interact with SecDF, and other proteins may be involved.

It localises to the cell membrane. Functionally, essential subunit of the Sec protein translocation channel SecYEG. Clamps together the 2 halves of SecY. May contact the channel plug during translocation. This Methanococcus maripaludis (strain DSM 14266 / JCM 13030 / NBRC 101832 / S2 / LL) protein is Protein translocase subunit SecE.